The primary structure comprises 658 residues: Endoglin (658 aa).

Residues 1–25 (MDRGTLPLAVALLLASCSLSPTSLA) form the signal peptide. Residues 26 to 46 (ETVHCDLQPVGPERGEVTYTT) are OR1, N-terminal part. The interval 26–337 (ETVHCDLQPV…SSCGGRLQTS (312 aa)) is required for interaction with GDF2. Over 26–586 (ETVHCDLQPV…PDLSGCTSKG (561 aa)) the chain is Extracellular. 7 cysteine pairs are disulfide-bonded: Cys-30–Cys-207, Cys-53–Cys-182, Cys-242–Cys-330, Cys-350–Cys-382, Cys-363–Cys-442, Cys-394–Cys-412, and Cys-493–Cys-549. Positions 47–199 (SQVSKGCVAQ…MGRTLEWRPR (153 aa)) are OR2. Residues Asn-88, Asn-102, Asn-121, and Asn-134 are each glycosylated (N-linked (GlcNAc...) asparagine). The segment at 200 to 330 (TPALVRGCHL…SIVSLHASSC (131 aa)) is OR1, C-terminal part. Residues 270–282 (QIWTTGEYSFKIF) are essential for interaction with GDF2. A glycan (N-linked (GlcNAc...) asparagine) is linked at Asn-307. The ZP domain occupies 363–533 (CADDAMTLVL…PEGDPRFSFL (171 aa)). Positions 399 to 401 (RGD) match the Cell attachment site motif. A helical transmembrane segment spans residues 587–611 (LVLPAVLGITFGAFLIGALLTAALW). At 612-658 (YIYSHTRSPSKREPVVAVAAPASSESSSTNHSIGSTQSTPCSTSSMA) the chain is on the cytoplasmic side. Low complexity predominate over residues 626 to 639 (VVAVAAPASSESSS). The tract at residues 626–658 (VVAVAAPASSESSSTNHSIGSTQSTPCSTSSMA) is disordered. Over residues 640-658 (TNHSIGSTQSTPCSTSSMA) the composition is skewed to polar residues. Phosphoserine; by TGFBR1 occurs at positions 646 and 649.

Homodimer; disulfide-linked. Forms a heteromeric complex with the signaling receptors for transforming growth factor-beta: TGFBR1 and/or TGFBR2. It is able to bind TGFB1 and TGFB2 with high affinity, but not TGFB3. Interacts with GDF2, forming a heterotetramer with a 2:2 stoichiometry. Interacts with ACVRL1. Can form a heteromeric complex with GDF2 and ACVRL1. Interacts with BMP10. Interacts with DYNLT4. Interacts with ARRB2. Detected on umbilical veil endothelial cells. Detected in placenta (at protein level). Detected on endothelial cells.

The protein localises to the cell membrane. In terms of biological role, vascular endothelium glycoprotein that plays an important role in the regulation of angiogenesis. Required for normal structure and integrity of adult vasculature. Regulates the migration of vascular endothelial cells. Required for normal extraembryonic angiogenesis and for embryonic heart development. May regulate endothelial cell shape changes in response to blood flow, which drive vascular remodeling and establishment of normal vascular morphology during angiogenesis. May play a critical role in the binding of endothelial cells to integrins and/or other RGD receptors. Acts as a TGF-beta coreceptor and is involved in the TGF-beta/BMP signaling cascade that ultimately leads to the activation of SMAD transcription factors. Required for GDF2/BMP9 signaling through SMAD1 in endothelial cells and modulates TGFB1 signaling through SMAD3. This is Endoglin (ENG) from Homo sapiens (Human).